Consider the following 1555-residue polypeptide: Pre-mRNA cleavage complex 2 protein Pcf11 (1555 aa).

The residue at position 2 (serine 2) is an N-acetylserine. Positions 14-142 (AREDACRDYQ…ALDVRVNSLD (129 aa)) constitute a CID domain. Serine 120 carries the phosphoserine; by WNK1 modification. Residue threonine 121 is modified to Phosphothreonine; by WNK1. Positions 167 to 186 (NKSPEEPSTPGTVVSSPSIS) are disordered. Phosphoserine occurs at positions 169 and 182. Positions 174–186 (STPGTVVSSPSIS) are enriched in low complexity. Residues 202 to 239 (QLIRQQLLAKQKQLLELQQKKLELELEQAKAQLAVSLS) adopt a coiled-coil conformation. Positions 266–648 (VKAPHQVPVQ…QQQHRLSVDA (383 aa)) are disordered. Lysine 291 is covalently cross-linked (Glycyl lysine isopeptide (Lys-Gly) (interchain with G-Cter in SUMO2)). Residues 307-317 (HGKDQSHRKEF) are compositionally biased toward basic and acidic residues. The span at 320–333 (NTLNQSDTKTSKTI) shows a compositional bias: polar residues. Lysine 328 participates in a covalent cross-link: Glycyl lysine isopeptide (Lys-Gly) (interchain with G-Cter in SUMO2). Basic and acidic residues-rich tracts occupy residues 342 to 364 (KQEK…DSKS), 380 to 421 (HTKD…DVKE), and 427 to 442 (EKKD…EHRL). Lysine 456 participates in a covalent cross-link: Glycyl lysine isopeptide (Lys-Gly) (interchain with G-Cter in SUMO2). Phosphothreonine is present on threonine 459. Residues 475 to 486 (STRKRSRSRSPK) show a composition bias toward basic residues. Serine 489, serine 494, serine 509, and serine 511 each carry phosphoserine. Over residues 494–508 (SPKRRDRRSPKRRQR) the composition is skewed to basic residues. The segment covering 529-567 (SHMEEFTPPSREDRNAKRSTKQDIRDPRRMKKTEEERPQ) has biased composition (basic and acidic residues). The segment covering 568–578 (ETTNQHSTKSG) has biased composition (polar residues). Residues 599-615 (SGWEENKSLQQVDEHSK) show a composition bias toward basic and acidic residues. Serine 645 carries the phosphoserine modification. Residue lysine 654 forms a Glycyl lysine isopeptide (Lys-Gly) (interchain with G-Cter in SUMO2) linkage. Serine 705 bears the Phosphoserine mark. Disordered regions lie at residues 707–732 (FNDR…PASR) and 749–781 (RPLF…PRID). Residues 716 to 725 (PRYEDSDKPF) show a composition bias toward basic and acidic residues. Lysine 723 participates in a covalent cross-link: Glycyl lysine isopeptide (Lys-Gly) (interchain with G-Cter in SUMO2). A phosphoserine mark is found at serine 728 and serine 777. At threonine 785 the chain carries Phosphothreonine. Phosphoserine is present on serine 794. An asymmetric dimethylarginine mark is found at arginine 805, arginine 820, and arginine 833. Serine 851 is modified (phosphoserine). Asymmetric dimethylarginine occurs at positions 929, 942, 955, 981, 994, and 1007. The segment at 1056 to 1081 (HGQPGPRFERTPGQPGPQRFDGPPGQ) is disordered. Residues arginine 1093 and arginine 1104 each carry the asymmetric dimethylarginine modification. Disordered regions lie at residues 1127 to 1147 (VSFN…NAPS) and 1159 to 1187 (FDSP…RASG). Serine 1161 is subject to Phosphoserine. The segment covering 1162–1175 (PQGPNFNGPHGPGN) has biased composition (low complexity). A Glycyl lysine isopeptide (Lys-Gly) (interchain with G-Cter in SUMO2) cross-link involves residue lysine 1278. A compositionally biased stretch (polar residues) spans 1289 to 1298 (SATTQVSEVT). The disordered stretch occupies residues 1289-1315 (SATTQVSEVTAQPPPEEEEDQNEDQDV). The span at 1303-1315 (PEEEEDQNEDQDV) shows a compositional bias: acidic residues. Residues lysine 1419, lysine 1511, and lysine 1524 each participate in a glycyl lysine isopeptide (Lys-Gly) (interchain with G-Cter in SUMO2) cross-link. Positions 1516-1555 (EPCDSPKVKEERIDTPPACTEESIATPSEIKTENDTVESV) are disordered. Over residues 1519-1529 (DSPKVKEERID) the composition is skewed to basic and acidic residues. Phosphothreonine is present on threonine 1530. Lysine 1546 is covalently cross-linked (Glycyl lysine isopeptide (Lys-Gly) (interchain with G-Cter in SUMO2)).

As to quaternary structure, associates with the phosphorylated CTD domain of POLR2A /RNA polymerase II. Post-translationally, phosphorylation at Ser-120 and/or Thr-121 by WNK1 weakens its association with POLR2A/RNA polymerase II, promoting transcript release from the chromatin template and mRNA export to the cytoplasm.

The protein localises to the nucleus. Component of pre-mRNA cleavage complex II, which promotes transcription termination by RNA polymerase II. In Homo sapiens (Human), this protein is Pre-mRNA cleavage complex 2 protein Pcf11.